The sequence spans 464 residues: tRNA modification GTPase MnmE (464 aa).

Residues R25, E87, and K130 each contribute to the (6S)-5-formyl-5,6,7,8-tetrahydrofolate site. A TrmE-type G domain is found at 226-386 (GLSVVLAGQP…LRAELLRIAG (161 aa)). N236 contributes to the K(+) binding site. GTP contacts are provided by residues 236–241 (NVGKSS), 255–261 (TPIAGTT), and 280–283 (DTAG). Position 240 (S240) interacts with Mg(2+). T255, I257, and T260 together coordinate K(+). Mg(2+) is bound at residue T261. (6S)-5-formyl-5,6,7,8-tetrahydrofolate is bound at residue K464.

Belongs to the TRAFAC class TrmE-Era-EngA-EngB-Septin-like GTPase superfamily. TrmE GTPase family. Homodimer. Heterotetramer of two MnmE and two MnmG subunits. Requires K(+) as cofactor.

It localises to the cytoplasm. Exhibits a very high intrinsic GTPase hydrolysis rate. Involved in the addition of a carboxymethylaminomethyl (cmnm) group at the wobble position (U34) of certain tRNAs, forming tRNA-cmnm(5)s(2)U34. In Burkholderia ambifaria (strain MC40-6), this protein is tRNA modification GTPase MnmE.